Here is a 532-residue protein sequence, read N- to C-terminus: tRNA-2-methylthio-N(6)-dimethylallyladenosine synthase (532 aa).

The segment at 1–21 (MTSTVAHGAGSAGPADDVEPM) is disordered. One can recognise an MTTase N-terminal domain in the interval 24–140 (RTYQVRTYGC…LPALLDRARH (117 aa)). C33, C69, C103, C177, C181, and C184 together coordinate [4Fe-4S] cluster. Residues 163-399 (RESAYAAWVS…VELQEQISLE (237 aa)) form the Radical SAM core domain. The TRAM domain maps to 402-470 (RAIVGQRVEL…PHHLIADGGI (69 aa)). Residues 510–532 (TSCGSAGGCGSADGAGSSAGDPQ) form a disordered region. The segment covering 523 to 532 (GAGSSAGDPQ) has biased composition (low complexity).

The protein belongs to the methylthiotransferase family. MiaB subfamily. As to quaternary structure, monomer. The cofactor is [4Fe-4S] cluster.

It is found in the cytoplasm. It carries out the reaction N(6)-dimethylallyladenosine(37) in tRNA + (sulfur carrier)-SH + AH2 + 2 S-adenosyl-L-methionine = 2-methylsulfanyl-N(6)-dimethylallyladenosine(37) in tRNA + (sulfur carrier)-H + 5'-deoxyadenosine + L-methionine + A + S-adenosyl-L-homocysteine + 2 H(+). In terms of biological role, catalyzes the methylthiolation of N6-(dimethylallyl)adenosine (i(6)A), leading to the formation of 2-methylthio-N6-(dimethylallyl)adenosine (ms(2)i(6)A) at position 37 in tRNAs that read codons beginning with uridine. This Mycobacterium ulcerans (strain Agy99) protein is tRNA-2-methylthio-N(6)-dimethylallyladenosine synthase.